We begin with the raw amino-acid sequence, 851 residues long: Thrombospondin type-1 domain-containing protein 1 (851 aa).

The N-terminal stretch at 1-24 (MKPMLKDFSNLLLVVLCDYVLGEA) is a signal peptide. Residues 25–412 (EYLLLQEPVH…SPQDPVKSNN (388 aa)) lie on the Extracellular side of the membrane. Residues asparagine 53, asparagine 58, asparagine 69, asparagine 110, asparagine 135, and asparagine 304 are each glycosylated (N-linked (GlcNAc...) asparagine). One can recognise a TSP type-1 domain in the interval 339–392 (IETWGPWQPWSPCSTTCGDAVRERRRLCVTSFPSRPSCSGMSSETSPCSLEECA). 3 disulfide bridges follow: cysteine 351–cysteine 386, cysteine 355–cysteine 391, and cysteine 366–cysteine 376. The chain crosses the membrane as a helical span at residues 413 to 433 (VVTVTGISLCLFIIFATVLIT). At 434–851 (LWRRFGRAPK…STLSVEKLVI (418 aa)) the chain is on the cytoplasmic side. Phosphoserine is present on serine 462. 3 disordered regions span residues 471-516 (SEPR…ESFQ), 626-646 (KSQI…HSRS), and 682-777 (SRMR…SSPI). Over residues 685–695 (RTWDQMEDRCR) the composition is skewed to basic and acidic residues. A compositionally biased stretch (polar residues) spans 765-776 (SHRSASRKQSSP).

As to quaternary structure, part of a complex composed of THSD1, PTK2/FAK1, TLN1 and VCL. Interacts with TLN1. Expressed in cerebral vascular endothelium.

It localises to the endosome membrane. The protein localises to the cell junction. It is found in the focal adhesion. Its function is as follows. Is a positive regulator of nascent focal adhesion assembly, involved in the modulation of endothelial cell attachment to the extracellular matrix. The chain is Thrombospondin type-1 domain-containing protein 1 (Thsd1) from Mus musculus (Mouse).